A 428-amino-acid chain; its full sequence is Gamma-glutamyl phosphate reductase (428 aa).

Belongs to the gamma-glutamyl phosphate reductase family.

It localises to the cytoplasm. It catalyses the reaction L-glutamate 5-semialdehyde + phosphate + NADP(+) = L-glutamyl 5-phosphate + NADPH + H(+). The protein operates within amino-acid biosynthesis; L-proline biosynthesis; L-glutamate 5-semialdehyde from L-glutamate: step 2/2. Catalyzes the NADPH-dependent reduction of L-glutamate 5-phosphate into L-glutamate 5-semialdehyde and phosphate. The product spontaneously undergoes cyclization to form 1-pyrroline-5-carboxylate. The chain is Gamma-glutamyl phosphate reductase from Picosynechococcus sp. (strain ATCC 27264 / PCC 7002 / PR-6) (Agmenellum quadruplicatum).